The following is a 217-amino-acid chain: Peptide methionine sulfoxide reductase MsrA 1 (217 aa).

C54 is a catalytic residue.

It belongs to the MsrA Met sulfoxide reductase family.

The enzyme catalyses L-methionyl-[protein] + [thioredoxin]-disulfide + H2O = L-methionyl-(S)-S-oxide-[protein] + [thioredoxin]-dithiol. It carries out the reaction [thioredoxin]-disulfide + L-methionine + H2O = L-methionine (S)-S-oxide + [thioredoxin]-dithiol. Functionally, has an important function as a repair enzyme for proteins that have been inactivated by oxidation. Catalyzes the reversible oxidation-reduction of methionine sulfoxide in proteins to methionine. The sequence is that of Peptide methionine sulfoxide reductase MsrA 1 (msrA1) from Caulobacter vibrioides (strain ATCC 19089 / CIP 103742 / CB 15) (Caulobacter crescentus).